A 232-amino-acid chain; its full sequence is Thrombin-like enzyme bothrombin (232 aa).

The region spanning 1-223 is the Peptidase S1 domain; sequence VIGGDECDIN…YLPWIQSIIA (223 aa). Disulfide bonds link Cys-7/Cys-139, Cys-26/Cys-42, Cys-74/Cys-230, Cys-118/Cys-184, Cys-150/Cys-163, and Cys-174/Cys-199. Residues His-41 and Asp-86 each act as charge relay system in the active site. Asn-98 and Asn-146 each carry an N-linked (GlcNAc...) asparagine glycan. Ser-178 acts as the Charge relay system in catalysis. An N-linked (GlcNAc...) asparagine glycan is attached at Asn-225.

Belongs to the peptidase S1 family. Snake venom subfamily. In terms of assembly, monomer. As to expression, expressed by the venom gland.

Its subcellular location is the secreted. The catalysed reaction is Selective cleavage of Arg-|-Xaa bond in fibrinogen, to form fibrin, and release fibrinopeptide A. The specificity of further degradation of fibrinogen varies with species origin of the enzyme.. With respect to regulation, inhibited by diisopropylfluorophosphate (DFP), but not by hirudin. Functionally, thrombin-like snake venom serine protease that clots fibrinogen by releasing fibrinopeptide A from the alpha chain of fibrinogen (FGA), induces platelet aggregation through its interaction with GPIb (GP1BA/GP1BB), and activates factor VIII (F8). This is Thrombin-like enzyme bothrombin from Bothrops jararaca (Jararaca).